Here is a 243-residue protein sequence, read N- to C-terminus: Ribosomal RNA small subunit methyltransferase J (243 aa).

Residues 112–113 (ER) and aspartate 164 each bind S-adenosyl-L-methionine.

It belongs to the methyltransferase superfamily. RsmJ family.

The protein resides in the cytoplasm. It carries out the reaction guanosine(1516) in 16S rRNA + S-adenosyl-L-methionine = N(2)-methylguanosine(1516) in 16S rRNA + S-adenosyl-L-homocysteine + H(+). In terms of biological role, specifically methylates the guanosine in position 1516 of 16S rRNA. The sequence is that of Ribosomal RNA small subunit methyltransferase J from Legionella pneumophila (strain Corby).